Here is a 399-residue protein sequence, read N- to C-terminus: 1-deoxy-D-xylulose 5-phosphate reductoisomerase (399 aa).

Thr-11, Gly-12, Ser-13, Ile-14, and Asn-125 together coordinate NADPH. Residue Lys-126 coordinates 1-deoxy-D-xylulose 5-phosphate. Glu-127 lines the NADPH pocket. Asp-151 contacts Mn(2+). 4 residues coordinate 1-deoxy-D-xylulose 5-phosphate: Ser-152, Glu-153, Ser-186, and His-209. Mn(2+) is bound at residue Glu-153. Gly-215 contacts NADPH. The 1-deoxy-D-xylulose 5-phosphate site is built by Ser-222, Asn-227, Lys-228, and Glu-231. Glu-231 is a Mn(2+) binding site.

It belongs to the DXR family. It depends on Mg(2+) as a cofactor. Requires Mn(2+) as cofactor.

The enzyme catalyses 2-C-methyl-D-erythritol 4-phosphate + NADP(+) = 1-deoxy-D-xylulose 5-phosphate + NADPH + H(+). The protein operates within isoprenoid biosynthesis; isopentenyl diphosphate biosynthesis via DXP pathway; isopentenyl diphosphate from 1-deoxy-D-xylulose 5-phosphate: step 1/6. Catalyzes the NADPH-dependent rearrangement and reduction of 1-deoxy-D-xylulose-5-phosphate (DXP) to 2-C-methyl-D-erythritol 4-phosphate (MEP). The protein is 1-deoxy-D-xylulose 5-phosphate reductoisomerase of Acinetobacter baumannii (strain SDF).